A 228-amino-acid chain; its full sequence is ATP phosphoribosyltransferase (228 aa).

This sequence belongs to the ATP phosphoribosyltransferase family. Short subfamily. As to quaternary structure, heteromultimer composed of HisG and HisZ subunits.

The protein resides in the cytoplasm. The enzyme catalyses 1-(5-phospho-beta-D-ribosyl)-ATP + diphosphate = 5-phospho-alpha-D-ribose 1-diphosphate + ATP. It participates in amino-acid biosynthesis; L-histidine biosynthesis; L-histidine from 5-phospho-alpha-D-ribose 1-diphosphate: step 1/9. In terms of biological role, catalyzes the condensation of ATP and 5-phosphoribose 1-diphosphate to form N'-(5'-phosphoribosyl)-ATP (PR-ATP). Has a crucial role in the pathway because the rate of histidine biosynthesis seems to be controlled primarily by regulation of HisG enzymatic activity. The polypeptide is ATP phosphoribosyltransferase (Moorella thermoacetica (strain ATCC 39073 / JCM 9320)).